The sequence spans 49 residues: uncharacterized protein (49 aa).

The protein belongs to the metallo-dependent hydrolases superfamily. TatD-type hydrolase family. The cofactor is a divalent metal cation.

This is an uncharacterized protein from Geobacillus stearothermophilus (Bacillus stearothermophilus).